The chain runs to 510 residues: Light-independent protochlorophyllide reductase subunit B (510 aa).

Aspartate 36 is a binding site for [4Fe-4S] cluster. Aspartate 296 functions as the Proton donor in the catalytic mechanism. 431-432 (GM) contacts substrate.

It belongs to the ChlB/BchB/BchZ family. As to quaternary structure, protochlorophyllide reductase is composed of three subunits; ChlL, ChlN and ChlB. Forms a heterotetramer of two ChlB and two ChlN subunits. It depends on [4Fe-4S] cluster as a cofactor.

The protein resides in the plastid. Its subcellular location is the chloroplast. It catalyses the reaction chlorophyllide a + oxidized 2[4Fe-4S]-[ferredoxin] + 2 ADP + 2 phosphate = protochlorophyllide a + reduced 2[4Fe-4S]-[ferredoxin] + 2 ATP + 2 H2O. It participates in porphyrin-containing compound metabolism; chlorophyll biosynthesis (light-independent). Functionally, component of the dark-operative protochlorophyllide reductase (DPOR) that uses Mg-ATP and reduced ferredoxin to reduce ring D of protochlorophyllide (Pchlide) to form chlorophyllide a (Chlide). This reaction is light-independent. The NB-protein (ChlN-ChlB) is the catalytic component of the complex. This chain is Light-independent protochlorophyllide reductase subunit B, found in Physcomitrium patens (Spreading-leaved earth moss).